Reading from the N-terminus, the 634-residue chain is Threonine--tRNA ligase (634 aa).

Residues 1–61 (MINITLPDGS…DHDASLRIIT (61 aa)) enclose the TGS domain. The catalytic stretch occupies residues 243–534 (DHRRIGKAQD…LIEHHAGAFP (292 aa)). Zn(2+)-binding residues include Cys334, His385, and His511.

It belongs to the class-II aminoacyl-tRNA synthetase family. As to quaternary structure, homodimer. Zn(2+) serves as cofactor.

The protein localises to the cytoplasm. It catalyses the reaction tRNA(Thr) + L-threonine + ATP = L-threonyl-tRNA(Thr) + AMP + diphosphate + H(+). In terms of biological role, catalyzes the attachment of threonine to tRNA(Thr) in a two-step reaction: L-threonine is first activated by ATP to form Thr-AMP and then transferred to the acceptor end of tRNA(Thr). Also edits incorrectly charged L-seryl-tRNA(Thr). The polypeptide is Threonine--tRNA ligase (Xanthomonas axonopodis pv. citri (strain 306)).